We begin with the raw amino-acid sequence, 277 residues long: Hydroxyethylthiazole kinase (277 aa).

Met56 contacts substrate. Residues Arg131 and Thr177 each coordinate ATP. Ala204 provides a ligand contact to substrate.

Belongs to the Thz kinase family. It depends on Mg(2+) as a cofactor.

The enzyme catalyses 5-(2-hydroxyethyl)-4-methylthiazole + ATP = 4-methyl-5-(2-phosphooxyethyl)-thiazole + ADP + H(+). It functions in the pathway cofactor biosynthesis; thiamine diphosphate biosynthesis; 4-methyl-5-(2-phosphoethyl)-thiazole from 5-(2-hydroxyethyl)-4-methylthiazole: step 1/1. Its function is as follows. Catalyzes the phosphorylation of the hydroxyl group of 4-methyl-5-beta-hydroxyethylthiazole (THZ). The sequence is that of Hydroxyethylthiazole kinase from Gemmatimonas aurantiaca (strain DSM 14586 / JCM 11422 / NBRC 100505 / T-27).